The chain runs to 364 residues: FK506-binding protein 4 (364 aa).

Disordered regions lie at residues 92–148 (SMFG…DDEI) and 168–239 (EADK…PTKP). The span at 94–148 (FGDDEHGEDEDNEEEEGEEGEDEEMEGEDEDEDEEDEDEEDEDEEEEDDEEDDEI) shows a compositional bias: acidic residues. Residues 168–184 (EADKNKQQKKPKQEEPV) show a composition bias toward basic and acidic residues. Residues 185–239 (KQVTPVKPTAQAAKPTAATTTTTTTTTTTPTKQTTPAKPAAKPVTPTKPVTPTKP) show a composition bias toward low complexity. Residues 277–363 (GKKVGVKYIG…IFDVELVSCA (87 aa)) form the PPIase FKBP-type domain.

It belongs to the FKBP-type PPIase family. In terms of assembly, binds to histones H3 and H4.

Its subcellular location is the nucleus. It catalyses the reaction [protein]-peptidylproline (omega=180) = [protein]-peptidylproline (omega=0). With respect to regulation, inhibited by both FK506 and rapamycin. Its function is as follows. PPIase that acts as a histone chaperone. Histone proline isomerase that increases the rate of cis-trans isomerization at prolines on the histone H3 N-terminal tail. Proline isomerization influences H3 methylation thereby regulating gene expression. This is FK506-binding protein 4 (fkbp4) from Dictyostelium discoideum (Social amoeba).